A 383-amino-acid chain; its full sequence is uncharacterized protein (383 aa).

The next 10 helical transmembrane spans lie at 25–45 (LWVA…PAVA), 53–73 (IYNV…PIMV), 103–123 (FTMV…LLTA), 139–159 (IAGC…MWGY), 166–186 (GLTL…YAPL), 200–220 (WQTI…AGIY), 238–258 (FLHY…ILLF), 272–292 (IFLI…ITYV), 309–329 (LIGA…LFGL), and 332–352 (GAAL…LMLV).

Belongs to the arsenical resistance-3 (ACR3) (TC 2.A.59) family.

Its subcellular location is the cell membrane. This is an uncharacterized protein from Synechocystis sp. (strain ATCC 27184 / PCC 6803 / Kazusa).